A 329-amino-acid polypeptide reads, in one-letter code: Signal recognition particle receptor FtsY (329 aa).

GTP-binding positions include 127 to 134 (GVNGVGKT), 209 to 213 (DTAGR), and 273 to 276 (TKLD).

This sequence belongs to the GTP-binding SRP family. FtsY subfamily. In terms of assembly, part of the signal recognition particle protein translocation system, which is composed of SRP and FtsY.

Its subcellular location is the cell membrane. It is found in the cytoplasm. The enzyme catalyses GTP + H2O = GDP + phosphate + H(+). Its function is as follows. Involved in targeting and insertion of nascent membrane proteins into the cytoplasmic membrane. Acts as a receptor for the complex formed by the signal recognition particle (SRP) and the ribosome-nascent chain (RNC). The sequence is that of Signal recognition particle receptor FtsY from Bacillus subtilis (strain 168).